The sequence spans 296 residues: 4-hydroxy-tetrahydrodipicolinate synthase (296 aa).

Residue Thr49 participates in pyruvate binding. Tyr137 functions as the Proton donor/acceptor in the catalytic mechanism. Residue Lys165 is the Schiff-base intermediate with substrate of the active site. Ile207 serves as a coordination point for pyruvate.

It belongs to the DapA family. As to quaternary structure, homotetramer; dimer of dimers.

The protein resides in the cytoplasm. It catalyses the reaction L-aspartate 4-semialdehyde + pyruvate = (2S,4S)-4-hydroxy-2,3,4,5-tetrahydrodipicolinate + H2O + H(+). It functions in the pathway amino-acid biosynthesis; L-lysine biosynthesis via DAP pathway; (S)-tetrahydrodipicolinate from L-aspartate: step 3/4. In terms of biological role, catalyzes the condensation of (S)-aspartate-beta-semialdehyde [(S)-ASA] and pyruvate to 4-hydroxy-tetrahydrodipicolinate (HTPA). The chain is 4-hydroxy-tetrahydrodipicolinate synthase from Afipia carboxidovorans (strain ATCC 49405 / DSM 1227 / KCTC 32145 / OM5) (Oligotropha carboxidovorans).